Consider the following 666-residue polypeptide: Neurexin-2-beta (666 aa).

Residues 1–10 (MPPGGSGPGG) show a composition bias toward gly residues. The tract at residues 1–30 (MPPGGSGPGGCPRRPPALAGPLPPPPPPPP) is disordered. Residues 1-50 (MPPGGSGPGGCPRRPPALAGPLPPPPPPPPPPLLPLLPLLLLLLLGAAEG) form the signal peptide. Over residues 21–30 (PLPPPPPPPP) the composition is skewed to pro residues. Topologically, residues 51-590 (ARVSSSLSTT…EVIRESSSTT (540 aa)) are extracellular. A Laminin G-like domain is found at 91 to 299 (TTYIFGKGGA…HLRLVGEGPS (209 aa)). 2 residues coordinate Ca(2+): Asp-143 and Val-160. The N-linked (GlcNAc...) asparagine glycan is linked to Asn-190. Residues Ile-242 and Asn-244 each contribute to the Ca(2+) site. The segment at 327 to 346 (ATTTTRRGRSPTLRDSTTQN) is disordered. Ser-354 carries an O-linked (Xyl...) (heparan sulfate) serine glycan. Disordered regions lie at residues 412–443 (ATQDTLPPPAARRPPSGGPCQAERDDSDCEEP) and 479–580 (TLLS…PGAV). A helical transmembrane segment spans residues 591–611 (GMVVGIVAAAALCILILLYAM). Topologically, residues 612–666 (YKYRNRDEGSYQVDQSRNYISNSAQSNGAVVKEKAPAAPKTPSKAKKNKDKEYYV) are cytoplasmic. The tract at residues 633–666 (NSAQSNGAVVKEKAPAAPKTPSKAKKNKDKEYYV) is disordered.

This sequence belongs to the neurexin family. As to quaternary structure, interacts (via cytoplasmic C-terminal region) with CASK. Specific isoforms bind alpha-dystroglycan and neuroligins NLGN1, NLGN2 and NLGN3. Interacts with CBLN1, CBLN2 and, less avidly, with CBLN4. Interacts with CLSTN3. O-glycosylated; contains heparan sulfate. Heparan sulfate attachment is required for synapse development by mediating interactions with neuroligins.

It is found in the presynaptic cell membrane. Neuronal cell surface protein that may be involved in cell recognition and cell adhesion. The sequence is that of Neurexin-2-beta (NRXN2) from Homo sapiens (Human).